Here is a 275-residue protein sequence, read N- to C-terminus: Energy-coupling factor transporter ATP-binding protein EcfA1 (275 aa).

Residues 5-240 (IDVKNLSFRY…NDLDQIGLDD (236 aa)) enclose the ABC transporter domain. 40–47 (GHNGSGKS) provides a ligand contact to ATP.

This sequence belongs to the ABC transporter superfamily. Energy-coupling factor EcfA family. In terms of assembly, forms a stable energy-coupling factor (ECF) transporter complex composed of 2 membrane-embedded substrate-binding proteins (S component), 2 ATP-binding proteins (A component) and 2 transmembrane proteins (T component).

It is found in the cell membrane. Functionally, ATP-binding (A) component of a common energy-coupling factor (ECF) ABC-transporter complex. Unlike classic ABC transporters this ECF transporter provides the energy necessary to transport a number of different substrates. This chain is Energy-coupling factor transporter ATP-binding protein EcfA1, found in Streptococcus pneumoniae serotype 4 (strain ATCC BAA-334 / TIGR4).